The primary structure comprises 526 residues: Alpha-N-acetylgalactosaminide alpha-2,6-sialyltransferase 1 (526 aa).

At 1–12 the chain is on the cytoplasmic side; sequence MTRYCRGLSQRQ. The chain crosses the membrane as a helical; Signal-anchor for type II membrane protein span at residues 13–33; sequence AFLLLTVLALLFILLFVVKDP. At 34–526 the chain is on the lumenal side; sequence RAKDSRCQFI…QRPQSDKAKN (493 aa). The tract at residues 49–182 is disordered; the sequence is SAQENQQKAE…TRRRQRLKAS (134 aa). Basic and acidic residues predominate over residues 81–106; that stretch reads KDLKKQEREAVQGEQAEGKEKRKLET. The segment covering 161-171 has biased composition (polar residues); sequence ATKSPASSPHP. N-linked (GlcNAc...) asparagine glycans are attached at residues Asn-206, Asn-228, Asn-259, Asn-303, and Asn-388. Intrachain disulfides connect Cys-207-Cys-290 and Cys-293-Cys-461.

This sequence belongs to the glycosyltransferase 29 family. Post-translationally, glycosylated; autosialylated. As to expression, submaxillary gland, mammary gland, spleen and colon.

The protein resides in the golgi apparatus membrane. It catalyses the reaction a beta-D-galactosyl-(1-&gt;3)-N-acetyl-alpha-D-galactosaminyl derivative + CMP-N-acetyl-beta-neuraminate = a beta-D-galactosyl-(1-&gt;3)-[N-acetyl-alpha-neuraminyl-(2-&gt;6)]-N-acetyl-alpha-D-galactosaminyl derivative + CMP + H(+). It carries out the reaction a 3-O-[N-acetyl-alpha-D-galactosaminyl]-L-seryl-[protein] + CMP-N-acetyl-beta-neuraminate = a 3-O-[N-acetyl-alpha-neuraminosyl-(2-&gt;6)-N-acetyl-alpha-D-galactosaminyl]-L-seryl-[protein] + CMP + H(+). The enzyme catalyses a 3-O-[N-acetyl-alpha-D-galactosaminyl]-L-threonyl-[protein] + CMP-N-acetyl-beta-neuraminate = a 3-O-[N-acetyl-alpha-neuraminosyl-(2-&gt;6)-N-acetyl-alpha-D-galactosaminyl]-L-threonyl-[protein] + CMP + H(+). The catalysed reaction is a 3-O-[beta-D-galactosyl-(1-&gt;3)-N-acetyl-alpha-D-galactosaminyl]-L-seryl-[protein] + CMP-N-acetyl-beta-neuraminate = a 3-O-{beta-D-galactosyl-(1-&gt;3)-[N-acetyl-alpha-neuraminosyl-(2-&gt;6)]-N-acetyl-alpha-D-galactosaminyl}-L-seryl-[protein] + CMP + H(+). It catalyses the reaction a 3-O-[beta-D-galactosyl-(1-&gt;3)-N-acetyl-alpha-D-galactosaminyl]-L-threonyl-[protein] + CMP-N-acetyl-beta-neuraminate = a 3-O-{beta-D-galactosyl-(1-&gt;3)-[N-acetyl-alpha-neuraminosyl-(2-&gt;6)]-N-acetyl-alpha-D-galactosaminyl}-L-threonyl-[protein] + CMP + H(+). It carries out the reaction a 3-O-[N-acetyl-alpha-neuraminyl-(2-&gt;3)-beta-D-galactosyl-(1-&gt;3)-N-acetyl-alpha-D-galactosaminyl]-L-threonyl-[protein] + CMP-N-acetyl-beta-neuraminate = a 3-O-{alpha-Neu5Ac-(2-&gt;3)-beta-D-Gal-(1-&gt;3)-[alpha-Neu5Ac-(2-&gt;6)]-alpha-D-GalNAc}-L-threonyl-[protein] + CMP + H(+). The protein operates within protein modification; protein glycosylation. In terms of biological role, protein sialyltransferase specifically expressed in goblet cells that plays a key role in intestinal host-commensal homeostasis. Conjugates sialic acid with an alpha-2-6 linkage to N-acetylgalactosamine (GalNAc) glycan chains linked to serine or threonine in glycoproteins. Catalyzes the formation of the sialyl-Tn (S-Tn) antigen, an antigen found in intestinal goblet cells. Protein sialylation in globlet cells is essential for mucus integrity and is required to protect the intestinal mucus against excessive bacterial proteolytic degradation. In Mus musculus (Mouse), this protein is Alpha-N-acetylgalactosaminide alpha-2,6-sialyltransferase 1.